The following is a 36-amino-acid chain: Delta-amaurobitoxin-Pl1c (36 aa).

Disulfide bonds link cysteine 3-cysteine 19, cysteine 10-cysteine 24, cysteine 18-cysteine 34, and cysteine 26-cysteine 32.

In terms of tissue distribution, expressed by the venom gland.

It localises to the secreted. In terms of biological role, binds at site 4 of sodium channels (Nav) and inhibits the fast inactivation of cockroach channels. This toxin is active only on insects. Has a potent activity against S.litura larvae. The sequence is that of Delta-amaurobitoxin-Pl1c from Pireneitega luctuosa (Tangled nest spider).